The sequence spans 957 residues: Glycine dehydrogenase (decarboxylating) (957 aa).

At K708 the chain carries N6-(pyridoxal phosphate)lysine.

It belongs to the GcvP family. As to quaternary structure, the glycine cleavage system is composed of four proteins: P, T, L and H. Pyridoxal 5'-phosphate is required as a cofactor.

It carries out the reaction N(6)-[(R)-lipoyl]-L-lysyl-[glycine-cleavage complex H protein] + glycine + H(+) = N(6)-[(R)-S(8)-aminomethyldihydrolipoyl]-L-lysyl-[glycine-cleavage complex H protein] + CO2. The glycine cleavage system catalyzes the degradation of glycine. The P protein binds the alpha-amino group of glycine through its pyridoxal phosphate cofactor; CO(2) is released and the remaining methylamine moiety is then transferred to the lipoamide cofactor of the H protein. This chain is Glycine dehydrogenase (decarboxylating), found in Escherichia coli O17:K52:H18 (strain UMN026 / ExPEC).